The sequence spans 150 residues: Macrodomain Ter protein (150 aa).

Belongs to the MatP family. As to quaternary structure, homodimer.

The protein resides in the cytoplasm. Its function is as follows. Required for spatial organization of the terminus region of the chromosome (Ter macrodomain) during the cell cycle. Prevents early segregation of duplicated Ter macrodomains during cell division. Binds specifically to matS, which is a 13 bp signature motif repeated within the Ter macrodomain. The sequence is that of Macrodomain Ter protein from Citrobacter koseri (strain ATCC BAA-895 / CDC 4225-83 / SGSC4696).